The primary structure comprises 450 residues: Exodeoxyribonuclease 7 large subunit (450 aa).

This sequence belongs to the XseA family. As to quaternary structure, heterooligomer composed of large and small subunits.

The protein resides in the cytoplasm. The catalysed reaction is Exonucleolytic cleavage in either 5'- to 3'- or 3'- to 5'-direction to yield nucleoside 5'-phosphates.. Its function is as follows. Bidirectionally degrades single-stranded DNA into large acid-insoluble oligonucleotides, which are then degraded further into small acid-soluble oligonucleotides. The protein is Exodeoxyribonuclease 7 large subunit of Rickettsia felis (strain ATCC VR-1525 / URRWXCal2) (Rickettsia azadi).